Consider the following 332-residue polypeptide: Ribosomal RNA small subunit methyltransferase H (332 aa).

Residues 36 to 38 (GGY), Asp54, Phe81, Asp102, and Gln109 each bind S-adenosyl-L-methionine.

Belongs to the methyltransferase superfamily. RsmH family.

Its subcellular location is the cytoplasm. The catalysed reaction is cytidine(1402) in 16S rRNA + S-adenosyl-L-methionine = N(4)-methylcytidine(1402) in 16S rRNA + S-adenosyl-L-homocysteine + H(+). Specifically methylates the N4 position of cytidine in position 1402 (C1402) of 16S rRNA. This is Ribosomal RNA small subunit methyltransferase H from Nitrobacter winogradskyi (strain ATCC 25391 / DSM 10237 / CIP 104748 / NCIMB 11846 / Nb-255).